The following is a 235-amino-acid chain: N-alpha-acetyltransferase 10 (235 aa).

Position 1 is an N-acetylmethionine (Met1). The tract at residues Met1–Ala58 is interaction with NAA15. The N-acetyltransferase domain occupies Met1–Thr152. Lys136 carries the post-translational modification N6-acetyllysine; by autocatalysis. Basic and acidic residues predominate over residues Glu196 to Ser213. Positions Glu196–Ser235 are disordered. Ser205 bears the Phosphoserine mark. Ser209 carries the post-translational modification Phosphoserine; by IKKB. Residues Ser213 and Ser216 each carry the phosphoserine modification.

The protein belongs to the acetyltransferase family. ARD1 subfamily. As to quaternary structure, component of the N-terminal acetyltransferase A complex (also called the NatA complex) composed of NAA10 and NAA15. Interacts with NAA15. Component of the N-terminal acetyltransferase A (NatA)/HYPK complex at least composed of NAA10, NAA15 and HYPK, which has N-terminal acetyltransferase activity. In complex with NAA15, interacts with HYPK. Component of the N-terminal acetyltransferase E (NatE) complex at least composed of NAA10, NAA15 and NAA50. Within the complex interacts with NAA15; the interaction is required for binding to NAAT50. Interacts with NAAT50. The interaction of the NatA complex with NAA50 reduces the acetylation activity of the NatA complex. Component of the N-terminal acetyltransferase E (NatE)/HYPK complex at least composed of NAA10, NAA15, NAA50 and HYPK. In complex with NAA15, interacts with HYPK; the interaction with HYPK reduces the capacity of the NatA complex to interact with NAA50. Interacts with HIF1A (via its ODD domain); the interaction increases HIF1A protein stability during normoxia, an down-regulates it when induced by hypoxia. Interacts with the ribosome. Binds to MYLK. Interacts with NAA16. Interacts (via its C-terminal domain) with TSC2, leading to its acetylation. Interacts with IKBKB. Interacts with HSPA1A and HSPA1B leading to its acetylation. In terms of processing, cleaved by caspases during apoptosis. Post-translationally, phosphorylation by IKBKB/IKKB at Ser-209 destabilises NAA10 and promotes its proteasome-mediated degradation. Autoacetylated at Lys-136 which stimulates its catalytic activity. As to expression, ubiquitous.

It localises to the cytoplasm. It is found in the nucleus. It catalyses the reaction N-terminal glycyl-[protein] + acetyl-CoA = N-terminal N(alpha)-acetylglycyl-[protein] + CoA + H(+). The enzyme catalyses N-terminal L-alanyl-[protein] + acetyl-CoA = N-terminal N(alpha)-acetyl-L-alanyl-[protein] + CoA + H(+). It carries out the reaction N-terminal L-seryl-[protein] + acetyl-CoA = N-terminal N(alpha)-acetyl-L-seryl-[protein] + CoA + H(+). The catalysed reaction is N-terminal L-valyl-[protein] + acetyl-CoA = N-terminal N(alpha)-acetyl-L-valyl-[protein] + CoA + H(+). It catalyses the reaction N-terminal L-cysteinyl-[protein] + acetyl-CoA = N-terminal N(alpha)-acetyl-L-cysteinyl-[protein] + CoA + H(+). The enzyme catalyses N-terminal L-threonyl-[protein] + acetyl-CoA = N-terminal N(alpha)-acetyl-L-threonyl-[protein] + CoA + H(+). Functionally, catalytic subunit of the N-terminal acetyltransferase A (NatA) complex which displays alpha (N-terminal) acetyltransferase activity. Acetylates amino termini that are devoid of initiator methionine. The alpha (N-terminal) acetyltransferase activity may be important for vascular, hematopoietic and neuronal growth and development. Without NAA15, displays epsilon (internal) acetyltransferase activity towards HIF1A, thereby promoting its degradation. Represses MYLK kinase activity by acetylation, and thus represses tumor cell migration. Acetylates, and stabilizes TSC2, thereby repressing mTOR activity and suppressing cancer development. Acetylates HSPA1A and HSPA1B at 'Lys-77' which enhances its chaperone activity and leads to preferential binding to co-chaperone HOPX. Acetylates HIST1H4A. Acts as a negative regulator of sister chromatid cohesion during mitosis. The polypeptide is N-alpha-acetyltransferase 10 (Naa10) (Mus musculus (Mouse)).